A 157-amino-acid chain; its full sequence is 2-C-methyl-D-erythritol 2,4-cyclodiphosphate synthase (157 aa).

Aspartate 8 and histidine 10 together coordinate a divalent metal cation. 4-CDP-2-C-methyl-D-erythritol 2-phosphate is bound by residues 8 to 10 and 34 to 35; these read DVH and HS. Position 42 (histidine 42) interacts with a divalent metal cation. Residues 56–58, 61–65, 132–135, phenylalanine 139, and arginine 142 contribute to the 4-CDP-2-C-methyl-D-erythritol 2-phosphate site; these read DLG, FPDTD, and TTTE.

It belongs to the IspF family. In terms of assembly, homotrimer. A divalent metal cation serves as cofactor.

The catalysed reaction is 4-CDP-2-C-methyl-D-erythritol 2-phosphate = 2-C-methyl-D-erythritol 2,4-cyclic diphosphate + CMP. Its pathway is isoprenoid biosynthesis; isopentenyl diphosphate biosynthesis via DXP pathway; isopentenyl diphosphate from 1-deoxy-D-xylulose 5-phosphate: step 4/6. Involved in the biosynthesis of isopentenyl diphosphate (IPP) and dimethylallyl diphosphate (DMAPP), two major building blocks of isoprenoid compounds. Catalyzes the conversion of 4-diphosphocytidyl-2-C-methyl-D-erythritol 2-phosphate (CDP-ME2P) to 2-C-methyl-D-erythritol 2,4-cyclodiphosphate (ME-CPP) with a corresponding release of cytidine 5-monophosphate (CMP). This chain is 2-C-methyl-D-erythritol 2,4-cyclodiphosphate synthase, found in Salinibacter ruber (strain DSM 13855 / M31).